Reading from the N-terminus, the 465-residue chain is BTB/POZ and MATH domain-containing protein 4 (465 aa).

Residues 12–40 are disordered; it reads LQRQNPLQKSEQQRRNFEMPSPPTTTSLS. An MATH domain is found at 46-180; it reads NGSHSFTIKG…DDCLKINCTV (135 aa). The BTB domain maps to 216-282; it reads SDITFNVSGE…IYKDALIEDA (67 aa). Disordered stretches follow at residues 395-429 and 441-465; these read SGGG…INGG and VNAN…ELED. Residues 442–458 show a composition bias toward low complexity; the sequence is NANGSGRNNNDNNNSDD.

This sequence belongs to the Tdpoz family. In terms of assembly, interacts with RAP2-4. Binds to MYB56 at the promoter of FLOWERING LOCUS T (FT). Ubiquitous.

It is found in the cytoplasm. Its pathway is protein modification; protein ubiquitination. Functionally, may act as a substrate-specific adapter of an E3 ubiquitin-protein ligase complex (CUL3-RBX1-BTB) which mediates the ubiquitination and subsequent proteasomal degradation of target proteins. The protein is BTB/POZ and MATH domain-containing protein 4 (BPM4) of Arabidopsis thaliana (Mouse-ear cress).